A 276-amino-acid chain; its full sequence is Diaminopimelate epimerase (276 aa).

The substrate site is built by N13, Q46, and N66. The active-site Proton donor is the C75. Substrate contacts are provided by residues 76-77, N159, N192, and 210-211; these read GN and ER. C219 functions as the Proton acceptor in the catalytic mechanism. 220 to 221 provides a ligand contact to substrate; the sequence is GT.

The protein belongs to the diaminopimelate epimerase family. As to quaternary structure, homodimer.

Its subcellular location is the cytoplasm. It catalyses the reaction (2S,6S)-2,6-diaminopimelate = meso-2,6-diaminopimelate. The protein operates within amino-acid biosynthesis; L-lysine biosynthesis via DAP pathway; DL-2,6-diaminopimelate from LL-2,6-diaminopimelate: step 1/1. Catalyzes the stereoinversion of LL-2,6-diaminopimelate (L,L-DAP) to meso-diaminopimelate (meso-DAP), a precursor of L-lysine and an essential component of the bacterial peptidoglycan. The polypeptide is Diaminopimelate epimerase (Pseudomonas syringae pv. tomato (strain ATCC BAA-871 / DC3000)).